Consider the following 62-residue polypeptide: Photosystem II reaction center protein Z (62 aa).

2 helical membrane passes run 8 to 28 (SVFA…VVLA) and 41 to 61 (FSGA…NSFI).

This sequence belongs to the PsbZ family. PSII is composed of 1 copy each of membrane proteins PsbA, PsbB, PsbC, PsbD, PsbE, PsbF, PsbH, PsbI, PsbJ, PsbK, PsbL, PsbM, PsbT, PsbY, PsbZ, Psb30/Ycf12, at least 3 peripheral proteins of the oxygen-evolving complex and a large number of cofactors. It forms dimeric complexes.

It localises to the plastid. It is found in the chloroplast thylakoid membrane. May control the interaction of photosystem II (PSII) cores with the light-harvesting antenna, regulates electron flow through the 2 photosystem reaction centers. PSII is a light-driven water plastoquinone oxidoreductase, using light energy to abstract electrons from H(2)O, generating a proton gradient subsequently used for ATP formation. This is Photosystem II reaction center protein Z from Staurastrum punctulatum (Green alga).